Here is a 500-residue protein sequence, read N- to C-terminus: Pyoverdin chromophore biosynthetic protein PvcC (500 aa).

FAD is required as a cofactor.

It functions in the pathway siderophore biosynthesis; pyoverdin biosynthesis. This is Pyoverdin chromophore biosynthetic protein PvcC (pvcC) from Pseudomonas aeruginosa (strain ATCC 15692 / DSM 22644 / CIP 104116 / JCM 14847 / LMG 12228 / 1C / PRS 101 / PAO1).